The following is a 224-amino-acid chain: Uridylate kinase (224 aa).

9–10 (GS) is a binding site for ATP. UMP is bound at residue G43. ATP is bound by residues G44 and R48. UMP contacts are provided by residues D65 and 113–119 (VVPGQTT). ATP is bound by residues T139, F145, and D148.

The protein belongs to the UMP kinase family. As to quaternary structure, homohexamer.

It is found in the cytoplasm. The enzyme catalyses UMP + ATP = UDP + ADP. Its pathway is pyrimidine metabolism; CTP biosynthesis via de novo pathway; UDP from UMP (UMPK route): step 1/1. With respect to regulation, inhibited by UTP. Catalyzes the reversible phosphorylation of UMP to UDP. The sequence is that of Uridylate kinase from Methanocella arvoryzae (strain DSM 22066 / NBRC 105507 / MRE50).